Consider the following 461-residue polypeptide: Cysteine--tRNA ligase (461 aa).

Zn(2+) is bound at residue Cys28. The 'HIGH' region signature appears at 30–40 (ITIYDLCHIGH). 3 residues coordinate Zn(2+): Cys209, His234, and Glu238. A 'KMSKS' region motif is present at residues 266–270 (KMSKS). An ATP-binding site is contributed by Lys269.

Belongs to the class-I aminoacyl-tRNA synthetase family. In terms of assembly, monomer. The cofactor is Zn(2+).

Its subcellular location is the cytoplasm. It catalyses the reaction tRNA(Cys) + L-cysteine + ATP = L-cysteinyl-tRNA(Cys) + AMP + diphosphate. This is Cysteine--tRNA ligase from Yersinia enterocolitica serotype O:8 / biotype 1B (strain NCTC 13174 / 8081).